Reading from the N-terminus, the 864-residue chain is Arf-GAP with GTPase, ANK repeat and PH domain-containing protein 1 (864 aa).

Positions 66 to 276 are small GTPase-like; it reads SRSVPELKVG…QTSNGGGSLS (211 aa). In terms of domain architecture, GLD spans 67 to 241; it reads RSVPELKVGI…TRKKQQLSIG (175 aa). GTP-binding positions include 78-85, 122-126, and 178-181; these read GNLASGKS, IRDEG, and TQDA. 3 disordered regions span residues 266–343, 405–455, and 499–549; these read SQTS…IGSG, VPGK…QMAS, and TGLG…LSST. Residues 275 to 289 show a composition bias toward low complexity; the sequence is LSDYSSSVPSTPSTS. Residues 322-337 show a composition bias toward basic and acidic residues; sequence KGSDPDKDKKGLESRA. Residues 346 to 591 form the PH domain; the sequence is IPIKQGMLLK…WVQAIESQIL (246 aa). Polar residues predominate over residues 413-428; the sequence is ATSSCAPVASPKTNGL. Over residues 507 to 517 the composition is skewed to low complexity; the sequence is SSPSISSTTSP. Residues 527-537 show a composition bias toward basic residues; the sequence is ANRKKHRRKKS. Over residues 538–549 the composition is skewed to polar residues; the sequence is TSNFKVDGLSST. In terms of domain architecture, Arf-GAP spans 612–732; the sequence is ALALQSIRNL…LFLSPLPCRD (121 aa). The C4-type zinc-finger motif lies at 627-650; the sequence is CVDCDAQSPDWASLNLGALMCIEC. 2 ANK repeats span residues 771 to 800 and 804 to 833; these read DRRT…DVMA and HGNT…PDEQ. The span at 845-854 shows a compositional bias: low complexity; the sequence is KNNRNNNSNA. Positions 845–864 are disordered; sequence KNNRNNNSNAGGSGLMPTLI.

Belongs to the centaurin gamma-like family. In terms of assembly, homodimer. Interacts with several subunits of the AP-3 protein complex.

It localises to the cytoplasm. Functionally, GTPase-activating protein. Directly and specifically regulates the adapter protein 3 (AP-3)-dependent trafficking of proteins in the endosomal-lysosomal system. The chain is Arf-GAP with GTPase, ANK repeat and PH domain-containing protein 1 (agap1) from Xenopus laevis (African clawed frog).